Reading from the N-terminus, the 135-residue chain is Universal stress protein Aq_178 (135 aa).

Belongs to the universal stress protein A family.

This chain is Universal stress protein Aq_178, found in Aquifex aeolicus (strain VF5).